The sequence spans 233 residues: 7-cyano-7-deazaguanine synthase (233 aa).

11-21 is a binding site for ATP; the sequence is LSGGLDSSTVL. Residues C195, C203, C206, and C209 each contribute to the Zn(2+) site.

Belongs to the QueC family. It depends on Zn(2+) as a cofactor.

The catalysed reaction is 7-carboxy-7-deazaguanine + NH4(+) + ATP = 7-cyano-7-deazaguanine + ADP + phosphate + H2O + H(+). Its pathway is purine metabolism; 7-cyano-7-deazaguanine biosynthesis. In terms of biological role, catalyzes the ATP-dependent conversion of 7-carboxy-7-deazaguanine (CDG) to 7-cyano-7-deazaguanine (preQ(0)). The sequence is that of 7-cyano-7-deazaguanine synthase from Thermosynechococcus vestitus (strain NIES-2133 / IAM M-273 / BP-1).